The sequence spans 162 residues: Regulator of sigma D (162 aa).

It belongs to the Rsd/AlgQ family. Interacts with RpoD.

The protein resides in the cytoplasm. In terms of biological role, binds RpoD and negatively regulates RpoD-mediated transcription activation by preventing the interaction between the primary sigma factor RpoD with the catalytic core of the RNA polymerase and with promoter DNA. May be involved in replacement of the RNA polymerase sigma subunit from RpoD to RpoS during the transition from exponential growth to the stationary phase. This chain is Regulator of sigma D, found in Salmonella paratyphi A (strain ATCC 9150 / SARB42).